The sequence spans 198 residues: Recombination protein RecR (198 aa).

The C4-type zinc finger occupies 57-72; it reads CSVCGHITENDPCYIC. In terms of domain architecture, Toprim spans 80-175; the sequence is SVICVVEDDK…KVTRLAQGLS (96 aa).

It belongs to the RecR family.

Its function is as follows. May play a role in DNA repair. It seems to be involved in an RecBC-independent recombinational process of DNA repair. It may act with RecF and RecO. In Staphylococcus aureus (strain MRSA252), this protein is Recombination protein RecR.